The primary structure comprises 569 residues: Mitogen-activated protein kinase 7 (569 aa).

The 292-residue stretch at 13–304 (YKIQEIVGKG…AEEALADPYF (292 aa)) folds into the Protein kinase domain. ATP-binding positions include 19-27 (VGKGSYGVV) and Lys-42. Asp-139 (proton acceptor) is an active-site residue. Thr-175 is modified (phosphothreonine). The TXY motif lies at 175-177 (TDY). The residue at position 177 (Tyr-177) is a Phosphotyrosine. The interval 401 to 420 (TTVHSTSIPPNEGLDATSQV) is disordered.

This sequence belongs to the protein kinase superfamily. CMGC Ser/Thr protein kinase family. MAP kinase subfamily. Post-translationally, dually phosphorylated on Thr-175 and Tyr-177, which activates the enzyme.

It catalyses the reaction L-seryl-[protein] + ATP = O-phospho-L-seryl-[protein] + ADP + H(+). The catalysed reaction is L-threonyl-[protein] + ATP = O-phospho-L-threonyl-[protein] + ADP + H(+). Its activity is regulated as follows. Activated by threonine and tyrosine phosphorylation. This Oryza sativa subsp. japonica (Rice) protein is Mitogen-activated protein kinase 7 (MPK7).